Consider the following 483-residue polypeptide: Glutarate-semialdehyde dehydrogenase (483 aa).

Residues 156–157 (WN), 180–183 (KPAS), and 233–234 (GS) each bind NADP(+). Glu-255 serves as the catalytic Proton acceptor. NADP(+) is bound at residue Leu-256. The active-site Nucleophile is Cys-289. Glu-386 is a binding site for NADP(+).

This sequence belongs to the aldehyde dehydrogenase family.

The enzyme catalyses 5-oxopentanoate + NADP(+) + H2O = glutarate + NADPH + 2 H(+). Its pathway is amino-acid degradation. Functionally, catalyzes the conversion of 5-oxopentanoate (glutarate semialdehyde) to glutarate. Involved in L-lysine degradation. This Pseudomonas aeruginosa (strain ATCC 15692 / DSM 22644 / CIP 104116 / JCM 14847 / LMG 12228 / 1C / PRS 101 / PAO1) protein is Glutarate-semialdehyde dehydrogenase.